The chain runs to 109 residues: Large ribosomal subunit protein P1 (109 aa).

The segment at 90 to 109 is disordered; sequence AAAKKEEEEEDDDMGFGLFD.

The protein belongs to the eukaryotic ribosomal protein P1/P2 family. In terms of assembly, P1 and P2 exist as dimers at the large ribosomal subunit.

Its function is as follows. Plays an important role in the elongation step of protein synthesis. The sequence is that of Large ribosomal subunit protein P1 from Trypanosoma cruzi.